Consider the following 532-residue polypeptide: MKTSEELRLAPDSLPSDLVPAPVLQASPADKNTDSEPVPPPCGGDDQLQVATDAVASSVVSQELQQGDSAPLEVEFNISSELSPRIEEQEVPENASLPVEETNRPELESGEAMEGVSEEPAAVDEGDIFWSYSFSQVPQYLSGSWSEFSTRSENFLKGCKWAPDGSCILTNSADNVLRIYNLPPELYSESEQVDYAEMVPVLRMVEGDTIYDYCWYSLMSSTQPDTSYVASSSRENPIHIWDAFTGELRASFRAYNHLDELTAAHSLCFSPDGSQLFCGFNRTVRVFSTSRPGRDCEVRTTFAKKQGQSGIISCLAFSPAQPLYACGSYGRTLGLYAWDDGSPLALLGGHQGGITHLCFHPDGNLFFSGARKDAELLCWDLRQPGHLLWSLSREVTTNQRIYFDLDPSGQFLVSGNTSGVVSVWDISGAFSDCKQLEPVMTFLPQDDCTNGVSLHPTLPLLATASGQRMFPEPTNSGDEGEPELDLPLLSLRHAHPECQLQLWWCGGGPDPSNPDEDQDEKGQGRTEAVGMS.

Residues 1–48 (MKTSEELRLAPDSLPSDLVPAPVLQASPADKNTDSEPVPPPCGGDDQL) are disordered. Phosphoserine is present on residues Ser-27, Ser-61, and Ser-83. Positions 83-115 (SPRIEEQEVPENASLPVEETNRPELESGEAMEG) are disordered. WD repeat units lie at residues 151 to 190 (RSENFLKGCKWAPDGSCILTNSADNVLRIYNLPPELYSES), 206 to 251 (EGDT…LRAS), 256 to 297 (NHLD…RDCE), 307 to 348 (GQSG…ALLG), 349 to 389 (GHQG…HLLW), and 395 to 434 (VTTNQRIYFDLDPSGQFLVSGNTSGVVSVWDISGAFSDCK). Thr-474 bears the Phosphothreonine mark. Phosphoserine is present on Ser-476. Residues 505 to 532 (CGGGPDPSNPDEDQDEKGQGRTEAVGMS) form a disordered region.

Belongs to the TCAB1 family. Component of the telomerase holoenzyme complex composed of one molecule of TERT, one molecule of WRAP53/TCAB1, two molecules of H/ACA ribonucleoprotein complex subunits DKC1, NOP10, NHP2 and GAR1, and a telomerase RNA template component (TERC). The telomerase holoenzyme complex is associated with TEP1, SMG6/EST1A and POT1. Interacts with the chaperonin-containing T-complex (TRiC) complex; which mediates the folding of WRAP53/TCAB1. Interacts with COIL. Interacts with SMN1. Interacts with RNF8. Interacts with histone H2AX. Post-translationally, phosphorylated at Ser-61 by ATM in response to DNA damage, promoting its interaction with histone H2AX and localization to sites of DNA double-strand breaks.

The protein localises to the nucleus. It is found in the cajal body. Its subcellular location is the chromosome. The protein resides in the telomere. Its function is as follows. RNA chaperone that plays a key role in telomere maintenance and RNA localization to Cajal bodies. Specifically recognizes and binds the Cajal body box (CAB box) present in both small Cajal body RNAs (scaRNAs) and telomerase RNA template component (TERC). Essential component of the telomerase holoenzyme complex, a ribonucleoprotein complex essential for the replication of chromosome termini that elongates telomeres in most eukaryotes. In the telomerase holoenzyme complex, required to stimulate the catalytic activity of the complex. Acts by specifically binding the CAB box of the TERC RNA and controlling the folding of the CR4/CR5 region of the TERC RNA, a critical step for telomerase activity. In addition, also controls telomerase holoenzyme complex localization to Cajal body. During S phase, required for delivery of TERC to telomeres during S phase and for telomerase activity. In addition to its role in telomere maintenance, also required for Cajal body formation, probably by mediating localization of scaRNAs to Cajal bodies. Also plays a role in DNA repair: phosphorylated by ATM in response to DNA damage and relocalizes to sites of DNA double-strand breaks to promote the repair of DNA double-strand breaks. Acts by recruiting the ubiquitin ligase RNF8 to DNA breaks and promote both homologous recombination (HR) and non-homologous end joining (NHEJ). This is Telomerase Cajal body protein 1 from Rattus norvegicus (Rat).